A 274-amino-acid chain; its full sequence is MAIVKCKPTSPGRRHVVKVVNPELHKGKPYAPLLEKNSKSGGRNNNGRITTRHIGGGHKQAYRIVDFKRNKDGIPATVERLEYDPNRSANIALVLYADGERRYILAPKGLKAGDKVQSGVDAAIKTGNTLPMRNIPVGSTVHNVEMKPGKGGQLARSAGTYVQIVARDGAYVTIRLRSGEMRKIPSDCRATIGEVGNSEHMLRVLGKAGASRWRGIRPTVRGTAMNPVDHPHGGGEGRNFGKHPVTPWGVQTKGKKTRKNKRTEHFIVHRRTKK.

Disordered stretches follow at residues 28-53 and 221-274; these read KPYA…TTRH and RGTA…RTKK. Over residues 39–48 the composition is skewed to low complexity; that stretch reads KSGGRNNNGR. Over residues 253–274 the composition is skewed to basic residues; it reads KGKKTRKNKRTEHFIVHRRTKK.

The protein belongs to the universal ribosomal protein uL2 family. As to quaternary structure, part of the 50S ribosomal subunit. Forms a bridge to the 30S subunit in the 70S ribosome.

One of the primary rRNA binding proteins. Required for association of the 30S and 50S subunits to form the 70S ribosome, for tRNA binding and peptide bond formation. It has been suggested to have peptidyltransferase activity; this is somewhat controversial. Makes several contacts with the 16S rRNA in the 70S ribosome. This chain is Large ribosomal subunit protein uL2, found in Proteus mirabilis (strain HI4320).